The sequence spans 525 residues: Probable metalloreductase AIM14 (525 aa).

A run of 7 helical transmembrane segments spans residues 13–33 (NIKY…YIAV), 52–72 (PLWL…VIHV), 82–102 (FGRL…RPSP), 118–138 (LGRL…VHFV), 152–172 (FLGV…LPFF), 179–199 (LFYT…IFHA), and 203–223 (VGWL…YRVL). The 113-residue stretch at 82–194 (FGRLCYALLP…YLSAWFVAIA (113 aa)) folds into the Ferric oxidoreductase domain. The FAD-binding FR-type domain occupies 215–344 (GSSLLYRVLA…GGAGISFALP (130 aa)). Residues 407 to 478 (LLSEDMEMEE…YHDGRPQPAD (72 aa)) form a disordered region. The span at 410–438 (EDMEMEEIGQEDEDRERDELDDLLSEDEG) shows a compositional bias: acidic residues. Residues 453–463 (GKDQDNGKREA) show a composition bias toward basic and acidic residues.

Belongs to the ferric reductase (FRE) family. AIM14 subfamily.

Its subcellular location is the membrane. Its function is as follows. Probable cell surface metalloreductase. May be involved in iron or copper homeostasis. The polypeptide is Probable metalloreductase AIM14 (AIM14) (Yarrowia lipolytica (strain CLIB 122 / E 150) (Yeast)).